Consider the following 360-residue polypeptide: Peptide chain release factor 1 (360 aa).

Gln234 carries the N5-methylglutamine modification.

This sequence belongs to the prokaryotic/mitochondrial release factor family. Post-translationally, methylated by PrmC. Methylation increases the termination efficiency of RF1.

The protein localises to the cytoplasm. Functionally, peptide chain release factor 1 directs the termination of translation in response to the peptide chain termination codons UAG and UAA. The sequence is that of Peptide chain release factor 1 from Clostridium perfringens (strain 13 / Type A).